The primary structure comprises 182 residues: Large ribosomal subunit protein bL25 (182 aa).

It belongs to the bacterial ribosomal protein bL25 family. CTC subfamily. In terms of assembly, part of the 50S ribosomal subunit; part of the 5S rRNA/L5/L18/L25 subcomplex. Contacts the 5S rRNA. Binds to the 5S rRNA independently of L5 and L18.

This is one of the proteins that binds to the 5S RNA in the ribosome where it forms part of the central protuberance. This chain is Large ribosomal subunit protein bL25, found in Borreliella burgdorferi (strain ZS7) (Borrelia burgdorferi).